The chain runs to 148 residues: Cell division protein SepF (148 aa).

The interval 1–59 is disordered; the sequence is MNNKFKDFFGFGDNDSYEERDAYEEHYDEQEEMQNSNRPTNSRDSNVVSIKAGQAGSGP. Positions 33–48 are enriched in polar residues; the sequence is MQNSNRPTNSRDSNVV.

It belongs to the SepF family. Homodimer. Interacts with FtsZ.

The protein resides in the cytoplasm. In terms of biological role, cell division protein that is part of the divisome complex and is recruited early to the Z-ring. Probably stimulates Z-ring formation, perhaps through the cross-linking of FtsZ protofilaments. Its function overlaps with FtsA. The polypeptide is Cell division protein SepF (Lactobacillus delbrueckii subsp. bulgaricus (strain ATCC BAA-365 / Lb-18)).